Here is a 538-residue protein sequence, read N- to C-terminus: Acetylcholine receptor subunit alpha-type acr-7 (538 aa).

A signal peptide spans Met-1 to Gly-27. At Ser-28–Tyr-250 the chain is on the extracellular side. N-linked (GlcNAc...) asparagine glycans are attached at residues Asn-41 and Asn-101. 2 cysteine pairs are disulfide-bonded: Cys-160/Cys-174 and Cys-229/Cys-230. Helical transmembrane passes span Val-251–Leu-271, Ile-280–Met-300, and Val-313–Leu-333. The Cytoplasmic segment spans residues Asn-334–Cys-513. The helical transmembrane segment at Leu-514 to Ile-534 threads the bilayer.

Belongs to the ligand-gated ion channel (TC 1.A.9) family. Acetylcholine receptor (TC 1.A.9.1) subfamily. As to quaternary structure, forms a homooligomeric channel blocked by alpha-bungarotoxin. The structure is probably pentameric.

The protein resides in the postsynaptic cell membrane. The protein localises to the cell membrane. In terms of biological role, after binding acetylcholine, the AChR responds by an extensive change in conformation that affects all subunits and leads to opening of an ion-conducting channel across the plasma membrane. This chain is Acetylcholine receptor subunit alpha-type acr-7 (acr-7), found in Caenorhabditis elegans.